A 527-amino-acid chain; its full sequence is Neutrophil cytosol factor 2 (527 aa).

3 TPR repeats span residues 37–70 (SRIC…DKHL), 71–104 (AVSY…LRGN), and 121–154 (CEVL…KSEP). Thr233 bears the Phosphothreonine mark. Positions 240–299 (LEGEAHRVLFGFVPETPEELQVMPGNIVFVLKKGNDNWATVMFNGQKGLVPCNYLEPVEL) constitute an SH3 1 domain. A disordered region spans residues 304 to 345 (QQQPQEETSLESDIPAPPSSSAPGRPQLSPGQKGKEEPKQEI). A Phosphoserine modification is found at Ser324. Residues 336–345 (KGKEEPKQEI) are compositionally biased toward basic and acidic residues. The PB1 domain occupies 352–430 (SYTLKVHYKY…YCLTLWCENT (79 aa)). Residue Ser400 is modified to Phosphoserine. The tract at residues 434–457 (QGFPDEPEESKKSDANNQTTEPEL) is disordered. One can recognise an SH3 2 domain in the interval 458-517 (KEGSKVVALFSYEATQPEDLEFLEGDVILVISTVNEQWLEGECKGKVGIFPKAFVEQHPT).

It belongs to the NCF2/NOXA1 family. As to quaternary structure, component of the phagocyte NADPH oxidase complex composed of an obligatory core heterodimer formed by the membrane proteins CYBA and CYBB and the cytosolic regulatory subunits NCF1/p47-phox, NCF2/p67-phox, NCF4/p40-phox and the small GTPase RAC1 or RAC2. Part of a cytosolic complex composed at least by NCF1, NCF2 and NCF4. Interacts with NCF4. Interacts (via the C-terminal SH3 domain) with NCF1 (via C-terminus). Interacts with SYTL1 and RAC1. May interact with NOXO1. Interacts with S100A8 and calprotectin (S100A8/9). Interacts with GBP7 (via GB1/RHD3-type G domain). Interacts with CYBB; the interaction is enhanced in the presence of GBP7.

It is found in the cytoplasm. In terms of biological role, subunit of the phagocyte NADPH oxidase complex that mediates the transfer of electrons from cytosolic NADPH to O2 to produce the superoxide anion (O2(-)). In the activated complex, electrons are first transferred from NADPH to flavin adenine dinucleotide (FAD) and subsequently transferred via two heme molecules to molecular oxygen, producing superoxide through an outer-sphere reaction. Activation of the NADPH oxidase complex is initiated by the assembly of cytosolic subunits of the NADPH oxidase complex with the core NADPH oxidase complex to form a complex at the plasma membrane or phagosomal membrane. This activation process is initiated by phosphorylation dependent binding of the cytosolic NCF1/p47-phox subunit to the C-terminus of CYBA/p22-phox. This chain is Neutrophil cytosol factor 2, found in Bos taurus (Bovine).